The sequence spans 356 residues: MKLNVNLPDHPYDVIIENGALANIGNWVSSLWKKQKIVLISDNHVNGLYGQKVVDQLEKSGFEVETFEFPEGEASKNLLTAEKAWNFCAEFGLTRSDGIIALGGGVTGDLAGFVASTYMRGIHFLQIPTSLTAQVDSSIGGKTGINSKMAKNMIGTFTQPDGVLIDPEVLKTLGQREFCEGLGEVIKCALIADKDLWNLLTDLSAKDLLENFAKIEEIIYRSCEVKRKVVVDDELDNGVRLYLNFGHTIGHAVENTAGYGKVMHGEAVAIGMVQISKIAEKKGLMPLGITDEIRKMVKKYGLPDDYQPWDEALLFKALTHDKKARGTIIKTVIVPEIGTAKINEVTFEEMKEYLKK.

NAD(+) contacts are provided by residues 71 to 76 (EGEASK), 105 to 109 (GVTGD), 129 to 130 (TS), Lys-142, and Lys-151. Zn(2+) is bound by residues Glu-184, His-247, and His-264.

It belongs to the sugar phosphate cyclases superfamily. Dehydroquinate synthase family. Co(2+) is required as a cofactor. Zn(2+) serves as cofactor. It depends on NAD(+) as a cofactor.

The protein resides in the cytoplasm. The catalysed reaction is 7-phospho-2-dehydro-3-deoxy-D-arabino-heptonate = 3-dehydroquinate + phosphate. It functions in the pathway metabolic intermediate biosynthesis; chorismate biosynthesis; chorismate from D-erythrose 4-phosphate and phosphoenolpyruvate: step 2/7. Functionally, catalyzes the conversion of 3-deoxy-D-arabino-heptulosonate 7-phosphate (DAHP) to dehydroquinate (DHQ). This Lactococcus lactis subsp. cremoris (strain MG1363) protein is 3-dehydroquinate synthase.